A 279-amino-acid chain; its full sequence is Large ribosomal subunit protein uL2 (279 aa).

Residues 218–279 are disordered; that stretch reads RPQTRGSAMN…ITRRKSNPKR (62 aa). A compositionally biased stretch (basic residues) spans 255 to 279; that stretch reads KGSKTRRKKASDKLIITRRKSNPKR.

This sequence belongs to the universal ribosomal protein uL2 family. Part of the 50S ribosomal subunit. Forms a bridge to the 30S subunit in the 70S ribosome.

In terms of biological role, one of the primary rRNA binding proteins. Required for association of the 30S and 50S subunits to form the 70S ribosome, for tRNA binding and peptide bond formation. It has been suggested to have peptidyltransferase activity; this is somewhat controversial. Makes several contacts with the 16S rRNA in the 70S ribosome. The protein is Large ribosomal subunit protein uL2 of Sulfurimonas denitrificans (strain ATCC 33889 / DSM 1251) (Thiomicrospira denitrificans (strain ATCC 33889 / DSM 1251)).